Here is a 123-residue protein sequence, read N- to C-terminus: Small ribosomal subunit protein uS12 (123 aa).

Asp-89 bears the 3-methylthioaspartic acid mark.

Belongs to the universal ribosomal protein uS12 family. Part of the 30S ribosomal subunit. Contacts proteins S8 and S17. May interact with IF1 in the 30S initiation complex.

With S4 and S5 plays an important role in translational accuracy. Its function is as follows. Interacts with and stabilizes bases of the 16S rRNA that are involved in tRNA selection in the A site and with the mRNA backbone. Located at the interface of the 30S and 50S subunits, it traverses the body of the 30S subunit contacting proteins on the other side and probably holding the rRNA structure together. The combined cluster of proteins S8, S12 and S17 appears to hold together the shoulder and platform of the 30S subunit. The sequence is that of Small ribosomal subunit protein uS12 from Gluconobacter oxydans (strain 621H) (Gluconobacter suboxydans).